We begin with the raw amino-acid sequence, 374 residues long: MGDEAEIKEHLKPQASSETIDKKHNVKGKRLWQKVKYQLVEFHSLPAYLRDNEYIIGHYRSEWPIKQILLSIFTIHNETLNVWTHLIGFFLFLALTIYTATKVPSVVDLHSLQHRLPDLLRKTDLHKLHSELMSRLPSSPSSWHVMDLLYNCLPERFSHGNYTDMCVLHSVREDLANLIAPLIFRPITRWPFYAFLGGAIFCLLASSTCHLLSCHSERVSYIMLRLDYAGIAALIATSFYPPVYYSFMCDPFFCNLYLGFITILGIATVLVSLLPVFQSLEFRVVRASLFFGMGFSGLAPILHKLIIFWDQPEALHMTGYEILMGLLYGLGAVVYATRIPERWMPGKFDIAGHSHQLFHVLVVAGALTHYRAGL.

The Cytoplasmic segment spans residues Met1–Thr79. A helical membrane pass occupies residues Leu80–Ala100. The Extracellular segment spans residues Thr101–Pro191. Residues Phe192–Leu212 form a helical membrane-spanning segment. Residues Ser213–Tyr228 are Cytoplasmic-facing. Residues Ala229–Cys249 form a helical membrane-spanning segment. At Asp250–Leu256 the chain is on the extracellular side. A helical transmembrane segment spans residues Tyr257–Phe277. Over Gln278 to Ser288 the chain is Cytoplasmic. A helical membrane pass occupies residues Leu289–Trp309. Topologically, residues Asp310 to Glu313 are extracellular. Residues Ala314–Val334 traverse the membrane as a helical segment. Residues Tyr335–Lys347 are Cytoplasmic-facing. The helical transmembrane segment at Phe348 to Thr368 threads the bilayer. At His369 to Leu374 the chain is on the extracellular side.

This sequence belongs to the ADIPOR family. In terms of tissue distribution, expressed in roots, leaves, stems and flowers.

The protein localises to the membrane. Its function is as follows. May play a role in abiotic stress response. The protein is Heptahelical transmembrane protein 5 (HHP5) of Arabidopsis thaliana (Mouse-ear cress).